Here is a 182-residue protein sequence, read N- to C-terminus: Translation initiation factor IF-3 (182 aa).

This sequence belongs to the IF-3 family. Monomer.

Its subcellular location is the cytoplasm. Its function is as follows. IF-3 binds to the 30S ribosomal subunit and shifts the equilibrium between 70S ribosomes and their 50S and 30S subunits in favor of the free subunits, thus enhancing the availability of 30S subunits on which protein synthesis initiation begins. This is Translation initiation factor IF-3 from Thermosynechococcus vestitus (strain NIES-2133 / IAM M-273 / BP-1).